Reading from the N-terminus, the 360-residue chain is DNA replication and repair protein RecF (360 aa).

Gly-33–Thr-40 provides a ligand contact to ATP.

Belongs to the RecF family.

It is found in the cytoplasm. In terms of biological role, the RecF protein is involved in DNA metabolism; it is required for DNA replication and normal SOS inducibility. RecF binds preferentially to single-stranded, linear DNA. It also seems to bind ATP. The sequence is that of DNA replication and repair protein RecF from Rickettsia rickettsii (strain Iowa).